The primary structure comprises 251 residues: CDP-diacylglycerol pyrophosphatase (251 aa).

A helical membrane pass occupies residues 4–24; that stretch reads AGLLFLVMIVIAVVAAGIGYW.

This sequence belongs to the Cdh family.

It is found in the cell inner membrane. It catalyses the reaction a CDP-1,2-diacyl-sn-glycerol + H2O = a 1,2-diacyl-sn-glycero-3-phosphate + CMP + 2 H(+). The protein operates within phospholipid metabolism; CDP-diacylglycerol degradation; phosphatidate from CDP-diacylglycerol: step 1/1. This is CDP-diacylglycerol pyrophosphatase from Escherichia coli O127:H6 (strain E2348/69 / EPEC).